The chain runs to 283 residues: Prepilin leader peptidase/N-methyltransferase (283 aa).

7 helical membrane-spanning segments follow: residues 13 to 33 (VWLL…NVVI), 106 to 126 (WRYP…GLLW), 128 to 148 (PGLA…LAAI), 153 to 173 (QLLP…FNLA), 176 to 196 (FVPL…LWLI), 216 to 236 (LLAA…VLIA), and 259 to 279 (LAFG…NVLG).

This sequence belongs to the peptidase A24 family.

It is found in the cell inner membrane. The enzyme catalyses Typically cleaves a -Gly-|-Phe- bond to release an N-terminal, basic peptide of 5-8 residues from type IV prepilin, and then N-methylates the new N-terminal amino group, the methyl donor being S-adenosyl-L-methionine.. In terms of biological role, plays a role in type II pseudopili formation by proteolytically removing the leader sequence from substrate proteins and subsequently monomethylating the alpha-amino group of the newly exposed N-terminal phenylalanine. Substrates include proteins required for biogenesis of the type II general secretory apparatus. In Dickeya chrysanthemi (Pectobacterium chrysanthemi), this protein is Prepilin leader peptidase/N-methyltransferase (outO).